A 452-amino-acid chain; its full sequence is Bifunctional protein GlmU (452 aa).

A pyrophosphorylase region spans residues 1–226 (MAFSVVVLAA…AVEVEGVNNR (226 aa)). UDP-N-acetyl-alpha-D-glucosamine is bound by residues 8 to 11 (LAAG), Lys-22, Gln-73, and 78 to 79 (GT). Asp-102 serves as a coordination point for Mg(2+). UDP-N-acetyl-alpha-D-glucosamine contacts are provided by Gly-137, Glu-151, Asn-166, and Asn-224. Residue Asn-224 coordinates Mg(2+). The interval 227–247 (LQLANLERALQNRQADELMTN) is linker. Positions 248–452 (GVTLLDPSRF…IPNWPRPTKK (205 aa)) are N-acetyltransferase. Arg-330 and Lys-348 together coordinate UDP-N-acetyl-alpha-D-glucosamine. Catalysis depends on His-360, which acts as the Proton acceptor. Residues Tyr-363 and Asn-374 each coordinate UDP-N-acetyl-alpha-D-glucosamine. Residues Ala-377, 383–384 (NY), Ser-402, Ala-420, and Arg-437 each bind acetyl-CoA.

In the N-terminal section; belongs to the N-acetylglucosamine-1-phosphate uridyltransferase family. It in the C-terminal section; belongs to the transferase hexapeptide repeat family. Homotrimer. Mg(2+) serves as cofactor.

It localises to the cytoplasm. The enzyme catalyses alpha-D-glucosamine 1-phosphate + acetyl-CoA = N-acetyl-alpha-D-glucosamine 1-phosphate + CoA + H(+). It catalyses the reaction N-acetyl-alpha-D-glucosamine 1-phosphate + UTP + H(+) = UDP-N-acetyl-alpha-D-glucosamine + diphosphate. Its pathway is nucleotide-sugar biosynthesis; UDP-N-acetyl-alpha-D-glucosamine biosynthesis; N-acetyl-alpha-D-glucosamine 1-phosphate from alpha-D-glucosamine 6-phosphate (route II): step 2/2. It participates in nucleotide-sugar biosynthesis; UDP-N-acetyl-alpha-D-glucosamine biosynthesis; UDP-N-acetyl-alpha-D-glucosamine from N-acetyl-alpha-D-glucosamine 1-phosphate: step 1/1. The protein operates within bacterial outer membrane biogenesis; LPS lipid A biosynthesis. In terms of biological role, catalyzes the last two sequential reactions in the de novo biosynthetic pathway for UDP-N-acetylglucosamine (UDP-GlcNAc). The C-terminal domain catalyzes the transfer of acetyl group from acetyl coenzyme A to glucosamine-1-phosphate (GlcN-1-P) to produce N-acetylglucosamine-1-phosphate (GlcNAc-1-P), which is converted into UDP-GlcNAc by the transfer of uridine 5-monophosphate (from uridine 5-triphosphate), a reaction catalyzed by the N-terminal domain. In Alteromonas mediterranea (strain DSM 17117 / CIP 110805 / LMG 28347 / Deep ecotype), this protein is Bifunctional protein GlmU.